The following is a 353-amino-acid chain: Photosystem II protein D1 (353 aa).

Residue T2 is modified to N-acetylthreonine. T2 bears the Phosphothreonine mark. 3 helical membrane-spanning segments follow: residues Y29–S46, H118–L133, and W142–A156. H118 is a chlorophyll a binding site. Y126 provides a ligand contact to pheophytin a. Positions 170 and 189 each coordinate [CaMn4O5] cluster. A helical transmembrane segment spans residues F197–L218. H198 serves as a coordination point for chlorophyll a. A quinone is bound by residues H215 and S264 to F265. H215 lines the Fe cation pocket. Residue H272 coordinates Fe cation. A helical transmembrane segment spans residues F274–L288. The [CaMn4O5] cluster site is built by H332, E333, D342, and A344. The propeptide occupies A345–G353.

It belongs to the reaction center PufL/M/PsbA/D family. PSII is composed of 1 copy each of membrane proteins PsbA, PsbB, PsbC, PsbD, PsbE, PsbF, PsbH, PsbI, PsbJ, PsbK, PsbL, PsbM, PsbT, PsbX, PsbY, PsbZ, Psb30/Ycf12, at least 3 peripheral proteins of the oxygen-evolving complex and a large number of cofactors. It forms dimeric complexes. Requires The D1/D2 heterodimer binds P680, chlorophylls that are the primary electron donor of PSII, and subsequent electron acceptors. It shares a non-heme iron and each subunit binds pheophytin, quinone, additional chlorophylls, carotenoids and lipids. D1 provides most of the ligands for the Mn4-Ca-O5 cluster of the oxygen-evolving complex (OEC). There is also a Cl(-1) ion associated with D1 and D2, which is required for oxygen evolution. The PSII complex binds additional chlorophylls, carotenoids and specific lipids. as cofactor. Tyr-161 forms a radical intermediate that is referred to as redox-active TyrZ, YZ or Y-Z. In terms of processing, C-terminally processed by CTPA; processing is essential to allow assembly of the oxygen-evolving complex and thus photosynthetic growth.

Its subcellular location is the plastid. It is found in the chloroplast thylakoid membrane. It carries out the reaction 2 a plastoquinone + 4 hnu + 2 H2O = 2 a plastoquinol + O2. In terms of biological role, photosystem II (PSII) is a light-driven water:plastoquinone oxidoreductase that uses light energy to abstract electrons from H(2)O, generating O(2) and a proton gradient subsequently used for ATP formation. It consists of a core antenna complex that captures photons, and an electron transfer chain that converts photonic excitation into a charge separation. The D1/D2 (PsbA/PsbD) reaction center heterodimer binds P680, the primary electron donor of PSII as well as several subsequent electron acceptors. This chain is Photosystem II protein D1, found in Coffea arabica (Arabian coffee).